We begin with the raw amino-acid sequence, 150 residues long: MIP18 family protein FAM96A (150 aa).

Belongs to the MIP18 family.

Its function is as follows. May play a role in chromosome segregation through establishment of sister chromatid cohesion. The protein is MIP18 family protein FAM96A (fam96A) of Dictyostelium discoideum (Social amoeba).